Here is a 725-residue protein sequence, read N- to C-terminus: Ribosomal RNA large subunit methyltransferase K/L (725 aa).

In terms of domain architecture, THUMP spans 46–157 (VGYRLCLWSR…KGQAVLSLDL (112 aa)).

It belongs to the methyltransferase superfamily. RlmKL family.

Its subcellular location is the cytoplasm. The catalysed reaction is guanosine(2445) in 23S rRNA + S-adenosyl-L-methionine = N(2)-methylguanosine(2445) in 23S rRNA + S-adenosyl-L-homocysteine + H(+). It carries out the reaction guanosine(2069) in 23S rRNA + S-adenosyl-L-methionine = N(2)-methylguanosine(2069) in 23S rRNA + S-adenosyl-L-homocysteine + H(+). In terms of biological role, specifically methylates the guanine in position 2445 (m2G2445) and the guanine in position 2069 (m7G2069) of 23S rRNA. The chain is Ribosomal RNA large subunit methyltransferase K/L from Stutzerimonas stutzeri (strain A1501) (Pseudomonas stutzeri).